Consider the following 135-residue polypeptide: Protein PsiE homolog (135 aa).

Helical transmembrane passes span 14–34 (LQTILNIGLLVLATILVIFLV), 54–74 (YQLIEGIVIYFLYFEFIALIV), 82–102 (HFPLRYFIYIGITAIIRLIIV), and 107–127 (PSDTLMYSAAILLLVVTLYLA).

Belongs to the PsiE family.

It is found in the cell inner membrane. In Pectobacterium carotovorum subsp. carotovorum (strain PC1), this protein is Protein PsiE homolog.